The sequence spans 1079 residues: Alpha-mannosidase C (1079 aa).

A signal peptide spans 1–22; that stretch reads MFYKTFGFLFIYLIILISGTLS. Zn(2+) contacts are provided by His-44 and Asp-46. Asn-60 and Asn-96 each carry an N-linked (GlcNAc...) asparagine glycan. Zn(2+) is bound at residue Asp-158. The active-site Nucleophile is Asp-158. Residues Asn-192, Asn-222, Asn-248, and Asn-467 are each glycosylated (N-linked (GlcNAc...) asparagine). His-475 is a Zn(2+) binding site. N-linked (GlcNAc...) asparagine glycans are attached at residues Asn-516, Asn-527, Asn-589, Asn-760, Asn-769, Asn-848, Asn-872, Asn-912, Asn-1040, and Asn-1057.

The protein belongs to the glycosyl hydrolase 38 family. Requires Zn(2+) as cofactor.

It is found in the secreted. The catalysed reaction is Hydrolysis of terminal, non-reducing alpha-D-mannose residues in alpha-D-mannosides.. The sequence is that of Alpha-mannosidase C (manC) from Dictyostelium discoideum (Social amoeba).